Consider the following 470-residue polypeptide: uncharacterized protein (470 aa).

The SPX domain occupies 1–337; sequence MKFGHDFKRA…SLTAQPLFFQ (337 aa). The interval 118–145 is disordered; it reads ASNVPSTPSDSTQQPPTNTLPSVSASSQ. The span at 122-136 shows a compositional bias: low complexity; it reads PSTPSDSTQQPPTNT. The RING-type zinc-finger motif lies at 374-413; it reads CAICSNVAYKPVRLGCSHVFCLHCLIILQKQKVDFCPLCR.

The protein resides in the cytoplasm. This is an uncharacterized protein from Schizosaccharomyces pombe (strain 972 / ATCC 24843) (Fission yeast).